A 317-amino-acid chain; its full sequence is Heme-binding protein HMX1 (317 aa).

The Cytoplasmic segment spans residues 1–289 (MEDSSNTIIP…FNKDSATRRA (289 aa)). The chain crosses the membrane as a helical; Anchor for type IV membrane protein span at residues 290-310 (LHTVMLLVLSIIAIWVLYFLV).

It depends on heme as a cofactor.

It localises to the endoplasmic reticulum membrane. Its function is as follows. Plays an important role in the degradation of heme under conditions of iron deprivation. In Saccharomyces cerevisiae (strain ATCC 204508 / S288c) (Baker's yeast), this protein is Heme-binding protein HMX1 (HMX1).